We begin with the raw amino-acid sequence, 486 residues long: Palmitoleoyl-protein carboxylesterase notum2 (486 aa).

An N-terminal signal peptide occupies residues 1 to 18 (MRILEIFAILLILKEVRP). N-linked (GlcNAc...) asparagine glycosylation occurs at Asn-183. Catalysis depends on charge relay system residues Ser-223, Asp-331, and His-380.

This sequence belongs to the pectinacetylesterase family. Notum subfamily.

It localises to the secreted. The catalysed reaction is [Wnt protein]-O-(9Z)-hexadecenoyl-L-serine + H2O = [Wnt protein]-L-serine + (9Z)-hexadecenoate + H(+). In terms of biological role, carboxylesterase that acts as a key negative regulator of the Wnt signaling pathway by specifically mediating depalmitoleoylation of WNT proteins. Serine palmitoleoylation of WNT proteins is required for efficient binding to frizzled receptors. The polypeptide is Palmitoleoyl-protein carboxylesterase notum2 (Xenopus laevis (African clawed frog)).